The following is a 276-amino-acid chain: 4-chlorobenzoyl coenzyme A dehalogenase-1 (276 aa).

66 to 71 is a substrate binding site; it reads AGFDLE. Residue H93 is the Proton acceptor of the active site. G117 is a substrate binding site. D148 functions as the Nucleophile in the catalytic mechanism. R261 lines the substrate pocket.

It belongs to the enoyl-CoA hydratase/isomerase family. Homotetramer.

It carries out the reaction 4-chlorobenzoyl-CoA + H2O = 4-hydroxybenzoyl-CoA + chloride + H(+). The protein operates within xenobiotic degradation; 4-chlorobenzoate degradation; 4-hydroxybenzoate from 4-chlorobenzoate: step 2/3. Its function is as follows. Dehalogenates 4-chlorobenzoyl-CoA, 4-iodobenzoyl-CoA, 4-bromobenzoyl-CoA and, at a slower rate, 4-fluorobenzoyl-CoA. Does not dehalogenate 2-chlorobenzoyl-CoA or 3-chlorobenzoyl-CoA. This chain is 4-chlorobenzoyl coenzyme A dehalogenase-1, found in Arthrobacter sp.